The chain runs to 249 residues: MQWGHCGVKSASCSWTPSLSSLLVWLILPFSLPYCLGSPSQDGYWSFFSEWFAPRFSVRALPFTLPNYRRSYEGLLPNCRPDVPQFAVKHPLGMFWHMRVSHLIDEMVSRRIYQTMEHSGQAAWKQVVGEATLTKLSGLDIVTHFQHLAAVEADSCRFLSSRLVMLKNLAVGNVSLQYNTTLDRVELIFPTPGTRPKLTDFRQWLISVHASIFSSVASSVTLFIVLWLRIPALRYVFGFHWPTATHHSS.

An N-terminal signal peptide occupies residues 1–35 (MQWGHCGVKSASCSWTPSLSSLLVWLILPFSLPYC). At 36–207 (LGSPSQDGYW…LTDFRQWLIS (172 aa)) the chain is on the virion surface side. Residues Asn173 and Asn179 are each glycosylated (N-linked (GlcNAc...) asparagine; by host). The helical transmembrane segment at 208–228 (VHASIFSSVASSVTLFIVLWL) threads the bilayer. The Intravirion segment spans residues 229 to 249 (RIPALRYVFGFHWPTATHHSS).

As to quaternary structure, heterotrimer of GP2a, GP3, and GP4. The GP2a-GP3-GP4 complex associates with the E protein. Interacts with host CD163; this interaction plays a role in virus entry into host cell.

The protein localises to the virion membrane. Its subcellular location is the host endoplasmic reticulum membrane. It localises to the host Golgi apparatus membrane. The protein resides in the secreted. In terms of biological role, minor envelope protein. Along with GP4, serves as the viral attachment protein responsible for mediating interactions with CD163 thereby playing a role in virus entry into susceptible host cells. In Porcine reproductive and respiratory syndrome virus (strain Lelystad) (PRRSV), this protein is Glycoprotein 2a (GP2a).